We begin with the raw amino-acid sequence, 999 residues long: MHIIKPVWLTHGGKLVVHDSSSSWHGPLTPTLLSTGERKDFEVYSCDVSPDGSRLVTAAGDGYVRIWSTEAIRNTDDSSQKPKQLASMSNHSGTIHTVRFSPNGKYLASGADDKIVCIYTLDANPPSHSTFGWSYDSSILVSVGLDSKVVVWSGHTFEKLKTLSVHQSHVKGITFDPANKYFATASDDRTVKIFRFTSPAPNSTAHDQMNNFVLETTISAPFQNSPLTAYFRRCSWSPDGMHIAAANAVNGPVSSVAIINRGSWDGDINLIGHEAPVEVCAFSPRLYSTQPPNKQTPDNQGQAVTVIACAGGDKSLSIWITTNPRPIVVAQELAAKSISDLAWSPDGTCLYATALDGTILAVRFEDGDLGYPMAMEENEKSLTKFGTNRRGAGITETTDGLLLEEKSKAGELKGVEGRMGALMGDGHASAEATVNGKALSSNGAAPAQGTSPTADAQKTQTNGTTTPAAQEADKPDPYQAKLERLKQRPTYTKDGKKRIAPLLVSGAGAAESSLPQARLMASVSSQVKADTPQSIVDLSKPFDGLPKGGLAALLFGNKRKLAQLEGDEDGHVEKRVALASQNGATPIMANTPDGLLPAQPQPPATGQQQTPEYIRPAVTNPCMAISQLRLAVPKVRSQIVRAIDSTGKPTEPPGASSEANKSRVDLVFEARNPSPASLTGRAVDREPVRLTLFRGEQPLWQDFLPRTVLLVTGNQSMWAAACEDGSVYIWTPAGRRLVSALVLEAQPVILECNGPWILCISAVGMCYVWNVKHLSSPHPPISLQPVLDAAVHTLGAHPSSAPAITNARINSEGRVIVALSNGEGYAYSPSMYTWQRMSEAWWAVGSQYWNTTEAPVGNLQSTDSQDKDAKAAVSAGIIPFLERNTTNETLLRGRAYFLQRLIKVLLSREGYESFESSVSIAHLENRLAAALSLGAKEEFRLYLSMYAKRIGAEGLKNKVEELLKGLIGGKHRDLQRVTVPYAKLLGVVDESEAGDAMET.

WD repeat units follow at residues 15–54 (LVVHDSSSSWHGPLTPTLLSTGERKDFEVYSCDVSPDGSR), 69–108 (TEAIRNTDDSSQKPKQLASMSNHSGTIHTVRFSPNGKYLA), 130–169 (TFGWSYDSSILVSVGLDSKVVVWSGHTFEKLKTLSVHQSH), 172–211 (GITFDPANKYFATASDDRTVKIFRFTSPAPNSTAHDQMNN), 233–276 (RCSW…HEAP), 279–339 (VCAF…KSIS), and 343–384 (WSPD…SLTK). A compositionally biased stretch (polar residues) spans 439–468 (LSSNGAAPAQGTSPTADAQKTQTNGTTTPA). The disordered stretch occupies residues 439–476 (LSSNGAAPAQGTSPTADAQKTQTNGTTTPAAQEADKPD).

Belongs to the WD repeat HIR1 family.

The protein localises to the nucleus. Required for replication-independent chromatin assembly and for the periodic repression of histone gene transcription during the cell cycle. In Aspergillus terreus (strain NIH 2624 / FGSC A1156), this protein is Protein hir1 (hir1).